The primary structure comprises 369 residues: Gap junction alpha-5 protein (369 aa).

Residues 2–19 lie on the Cytoplasmic side of the membrane; sequence GDWSFLGEFLEEVHKHST. Residues 20–40 traverse the membrane as a helical segment; that stretch reads VVGKVWLTVLFIFRMLVLGTA. The Extracellular segment spans residues 41-76; sequence AGPLWGDEQSDFMCDTQQPGCENVCYDKAFPISHVR. A helical membrane pass occupies residues 77 to 97; it reads FWVLQIIFVSTPSLVYMGHAM. Topologically, residues 98–169 are cytoplasmic; it reads HTVRMEEKRK…YSILIRTAME (72 aa). A helical membrane pass occupies residues 170 to 190; sequence IAFIVGQYILYGIFLETLYIC. Residues 191–210 lie on the Extracellular side of the membrane; the sequence is QRAPCPHPVNCYVSRPTEKN. The helical transmembrane segment at 211 to 231 threads the bilayer; the sequence is VFIIFMLAVAVLSLFLSLAEL. The Cytoplasmic segment spans residues 232–369; that stretch reads YHLGWKKAKE…SKARSDDLSV (138 aa). The tract at residues 347–369 is disordered; it reads NEKRRFSKASRASSKARSDDLSV.

This sequence belongs to the connexin family. Alpha-type (group II) subfamily. In terms of assembly, a connexon is composed of a hexamer of connexins. In terms of tissue distribution, mostly in heart, and in the whole embryo, liver, stomach, and pectoral muscle.

Its subcellular location is the cell membrane. It is found in the cell junction. The protein localises to the gap junction. Functionally, one gap junction consists of a cluster of closely packed pairs of transmembrane channels, the connexons, through which materials of low MW diffuse from one cell to a neighboring cell. The chain is Gap junction alpha-5 protein (GJA5) from Gallus gallus (Chicken).